The following is a 791-amino-acid chain: Cellobionic acid phosphorylase (791 aa).

Asp-478 functions as the Proton donor in the catalytic mechanism.

This sequence belongs to the glycosyl hydrolase 94 family. Cellobionic acid phosphorylase subfamily. Homodimer.

It carries out the reaction 4-O-beta-D-glucopyranosyl-D-gluconate + phosphate = D-gluconate + alpha-D-glucose 1-phosphate. It functions in the pathway glycan metabolism; cellulose degradation. Functionally, catalyzes the reversible phosphorolysis of cellobionic acid (4-O-beta-D-glucopyranosyl-D-gluconate), a probable step in cellulose degradation. May be part of a metabolic pathway where cellobionic acid is converted into alpha-D-glucose 1-phosphate and D-gluconic acid to enter glycolysis and the pentose phosphate pathway, respectively. Produces 4-O-beta-D-glucopyranosyl-D-glucuronate from alpha-D-glucose 1-phosphate and D-glucuronate with low activity in the synthetic direction. This is Cellobionic acid phosphorylase from Neurospora crassa (strain ATCC 24698 / 74-OR23-1A / CBS 708.71 / DSM 1257 / FGSC 987).